Consider the following 155-residue polypeptide: SsrA-binding protein (155 aa).

It belongs to the SmpB family.

Its subcellular location is the cytoplasm. In terms of biological role, required for rescue of stalled ribosomes mediated by trans-translation. Binds to transfer-messenger RNA (tmRNA), required for stable association of tmRNA with ribosomes. tmRNA and SmpB together mimic tRNA shape, replacing the anticodon stem-loop with SmpB. tmRNA is encoded by the ssrA gene; the 2 termini fold to resemble tRNA(Ala) and it encodes a 'tag peptide', a short internal open reading frame. During trans-translation Ala-aminoacylated tmRNA acts like a tRNA, entering the A-site of stalled ribosomes, displacing the stalled mRNA. The ribosome then switches to translate the ORF on the tmRNA; the nascent peptide is terminated with the 'tag peptide' encoded by the tmRNA and targeted for degradation. The ribosome is freed to recommence translation, which seems to be the essential function of trans-translation. This Helicobacter hepaticus (strain ATCC 51449 / 3B1) protein is SsrA-binding protein.